Consider the following 177-residue polypeptide: Nucleoside triphosphate/diphosphate phosphatase (177 aa).

Arg-23 acts as the Proton donor in catalysis. Residues Asn-87, Asp-103, Asp-105, Asp-107, Asp-120, and Glu-123 each coordinate Mg(2+).

Belongs to the Ntdp family. The cofactor is Mg(2+).

The enzyme catalyses a ribonucleoside 5'-triphosphate + H2O = a ribonucleoside 5'-diphosphate + phosphate + H(+). The catalysed reaction is a ribonucleoside 5'-diphosphate + H2O = a ribonucleoside 5'-phosphate + phosphate + H(+). Has nucleoside phosphatase activity towards nucleoside triphosphates and nucleoside diphosphates. The sequence is that of Nucleoside triphosphate/diphosphate phosphatase from Streptococcus mutans serotype c (strain ATCC 700610 / UA159).